A 246-amino-acid polypeptide reads, in one-letter code: tRNA (guanine-N(1)-)-methyltransferase (246 aa).

Residues glycine 117 and 137–142 each bind S-adenosyl-L-methionine; that span reads IGDYVL.

The protein belongs to the RNA methyltransferase TrmD family. In terms of assembly, homodimer.

The protein localises to the cytoplasm. The enzyme catalyses guanosine(37) in tRNA + S-adenosyl-L-methionine = N(1)-methylguanosine(37) in tRNA + S-adenosyl-L-homocysteine + H(+). Functionally, specifically methylates guanosine-37 in various tRNAs. The protein is tRNA (guanine-N(1)-)-methyltransferase of Acinetobacter baumannii (strain AB307-0294).